The following is a 414-amino-acid chain: Tyrosine--tRNA ligase (414 aa).

Tyrosine 35 contributes to the L-tyrosine binding site. A 'HIGH' region motif is present at residues 40 to 49; it reads PTADSLHVGH. The L-tyrosine site is built by tyrosine 164 and glutamine 168. The 'KMSKS' region motif lies at 226 to 230; the sequence is KFGKT. Lysine 229 provides a ligand contact to ATP. Residues 347–414 form the S4 RNA-binding domain; the sequence is TKVIDALIEV…KKKYFVILIK (68 aa).

Belongs to the class-I aminoacyl-tRNA synthetase family. TyrS type 1 subfamily. As to quaternary structure, homodimer.

The protein localises to the cytoplasm. The catalysed reaction is tRNA(Tyr) + L-tyrosine + ATP = L-tyrosyl-tRNA(Tyr) + AMP + diphosphate + H(+). Its function is as follows. Catalyzes the attachment of tyrosine to tRNA(Tyr) in a two-step reaction: tyrosine is first activated by ATP to form Tyr-AMP and then transferred to the acceptor end of tRNA(Tyr). This chain is Tyrosine--tRNA ligase, found in Mycoplasma mycoides subsp. mycoides SC (strain CCUG 32753 / NCTC 10114 / PG1).